A 215-amino-acid chain; its full sequence is Large ribosomal subunit protein uL3 (215 aa).

At Q156 the chain carries N5-methylglutamine.

The protein belongs to the universal ribosomal protein uL3 family. As to quaternary structure, part of the 50S ribosomal subunit. Forms a cluster with proteins L14 and L19. Post-translationally, methylated by PrmB.

Its function is as follows. One of the primary rRNA binding proteins, it binds directly near the 3'-end of the 23S rRNA, where it nucleates assembly of the 50S subunit. This is Large ribosomal subunit protein uL3 from Xylella fastidiosa (strain M12).